The sequence spans 125 residues: Phosphoribosyl-AMP cyclohydrolase (125 aa).

Residue Asp-74 participates in Mg(2+) binding. Cys-75 contributes to the Zn(2+) binding site. Asp-76 and Asp-78 together coordinate Mg(2+). Positions 92 and 99 each coordinate Zn(2+).

The protein belongs to the PRA-CH family. Homodimer. Mg(2+) serves as cofactor. The cofactor is Zn(2+).

Its subcellular location is the cytoplasm. It carries out the reaction 1-(5-phospho-beta-D-ribosyl)-5'-AMP + H2O = 1-(5-phospho-beta-D-ribosyl)-5-[(5-phospho-beta-D-ribosylamino)methylideneamino]imidazole-4-carboxamide. Its pathway is amino-acid biosynthesis; L-histidine biosynthesis; L-histidine from 5-phospho-alpha-D-ribose 1-diphosphate: step 3/9. In terms of biological role, catalyzes the hydrolysis of the adenine ring of phosphoribosyl-AMP. In Geobacter sulfurreducens (strain ATCC 51573 / DSM 12127 / PCA), this protein is Phosphoribosyl-AMP cyclohydrolase.